The following is a 445-amino-acid chain: 3-phosphoshikimate 1-carboxyvinyltransferase (445 aa).

3-phosphoshikimate contacts are provided by Lys28, Ser29, and Arg33. Residue Lys28 participates in phosphoenolpyruvate binding. Phosphoenolpyruvate is bound by residues Gly101 and Arg129. Ser175, Gln177, Asp328, and Lys355 together coordinate 3-phosphoshikimate. Phosphoenolpyruvate is bound at residue Gln177. Residue Asp328 is the Proton acceptor of the active site. Phosphoenolpyruvate is bound by residues Arg359 and Arg402.

This sequence belongs to the EPSP synthase family. As to quaternary structure, monomer.

Its subcellular location is the cytoplasm. The enzyme catalyses 3-phosphoshikimate + phosphoenolpyruvate = 5-O-(1-carboxyvinyl)-3-phosphoshikimate + phosphate. It participates in metabolic intermediate biosynthesis; chorismate biosynthesis; chorismate from D-erythrose 4-phosphate and phosphoenolpyruvate: step 6/7. Its function is as follows. Catalyzes the transfer of the enolpyruvyl moiety of phosphoenolpyruvate (PEP) to the 5-hydroxyl of shikimate-3-phosphate (S3P) to produce enolpyruvyl shikimate-3-phosphate and inorganic phosphate. The sequence is that of 3-phosphoshikimate 1-carboxyvinyltransferase from Rhodopseudomonas palustris (strain HaA2).